Here is a 232-residue protein sequence, read N- to C-terminus: MGQKVHPNGIRLGIVKPWNATWFANTKDFADNLDGDFKVRQFLTKELQKASLSRIVIERPAKSIRVTIHTARPGVVIGKKGEDVEKLRAAVAKIAGVPAQINIAEVRKPELDAQLVGDSIASQLERRVMFRRAMKRAVQNAMRLGAKGIKVEVSGRLGGAEIARSEWYREGRVPLHTLRADIDYATSSAHTQYGVIGIKTWIFKGEILGGMPAANAVEPKGDKPKKQRKGRK.

The KH type-2 domain occupies 39-107 (VRQFLTKELQ…PAQINIAEVR (69 aa)). The interval 213–232 (AANAVEPKGDKPKKQRKGRK) is disordered.

Belongs to the universal ribosomal protein uS3 family. As to quaternary structure, part of the 30S ribosomal subunit. Forms a tight complex with proteins S10 and S14.

Its function is as follows. Binds the lower part of the 30S subunit head. Binds mRNA in the 70S ribosome, positioning it for translation. The protein is Small ribosomal subunit protein uS3 of Vibrio campbellii (strain ATCC BAA-1116).